A 232-amino-acid chain; its full sequence is Orotidine 5'-phosphate decarboxylase (232 aa).

Residues aspartate 11, lysine 32, 59–68, threonine 116, arginine 178, glutamine 188, glycine 208, and arginine 209 contribute to the substrate site; that span reads DLKLHDIPHT. Lysine 61 functions as the Proton donor in the catalytic mechanism.

Belongs to the OMP decarboxylase family. Type 1 subfamily. Homodimer.

The catalysed reaction is orotidine 5'-phosphate + H(+) = UMP + CO2. Its pathway is pyrimidine metabolism; UMP biosynthesis via de novo pathway; UMP from orotate: step 2/2. Catalyzes the decarboxylation of orotidine 5'-monophosphate (OMP) to uridine 5'-monophosphate (UMP). The protein is Orotidine 5'-phosphate decarboxylase of Synechococcus sp. (strain JA-3-3Ab) (Cyanobacteria bacterium Yellowstone A-Prime).